A 21-amino-acid chain; its full sequence is 71 kDa F-actin-binding protein (21 aa).

To yeast fimbrin. In terms of processing, the N-terminus is blocked.

Its function is as follows. Binds directly to F-actin and induces actin filament bundling. May function as a regulator of actin filament organization. The protein is 71 kDa F-actin-binding protein of Tetrahymena pyriformis.